Here is a 656-residue protein sequence, read N- to C-terminus: tRNA(Met) cytidine acetyltransferase TmcA (656 aa).

Residues glutamine 145, 167–176, and arginine 291 each bind ATP; that span reads GRGKSALLGM. The N-acetyltransferase domain occupies 368–542; sequence SEGKYNRQFF…SGCYSAIALK (175 aa). Residues 474–476, 481–487, and glutamate 510 contribute to the acetyl-CoA site; these read IAV and QQKGIGQ.

This sequence belongs to the RNA cytidine acetyltransferase family. TmcA subfamily.

It localises to the cytoplasm. It catalyses the reaction cytidine(34) in elongator tRNA(Met) + acetyl-CoA + ATP + H2O = N(4)-acetylcytidine(34) in elongator tRNA(Met) + ADP + phosphate + CoA + H(+). Functionally, catalyzes the formation of N(4)-acetylcytidine (ac(4)C) at the wobble position of tRNA(Met), by using acetyl-CoA as an acetyl donor and ATP (or GTP). This Haemophilus influenzae (strain ATCC 51907 / DSM 11121 / KW20 / Rd) protein is tRNA(Met) cytidine acetyltransferase TmcA.